We begin with the raw amino-acid sequence, 312 residues long: G-protein coupled receptor BILF1 (312 aa).

Residues 1–40 (MLSTMAPGSTVGTLVANMTSVNATEDACTKSYSAFLSGMT) lie on the Extracellular side of the membrane. Disulfide bonds link C28-C258 and C97-C174. A helical transmembrane segment spans residues 41 to 61 (SLLLVLLILLTLAGILFIIFV). Residues 62 to 67 (RKLVHR) are Cytoplasmic-facing. The helical transmembrane segment at 68–88 (MDVWLIALLIELLLWVLGKMI) threads the bilayer. Over 89–95 (QEFSSTG) the chain is Extracellular. A helical transmembrane segment spans residues 96–116 (LCLLTQNMMFLGLMCSVWTHL). Residues 117–138 (GMALEKTLALFSRTPKRTSHRN) are Cytoplasmic-facing. A helical transmembrane segment spans residues 139-159 (VCLYLMGVFCLVLLLIIILLI). Topologically, residues 160-192 (TMGPDANLNRGPNMCREGPTKGMHTAVQGLKAG) are extracellular. The helical transmembrane segment at 193–213 (CYLLAAVLIVLLTVIIIWKLL) threads the bilayer. Residues 214-228 (RTKFGRKPRLICNVT) are Cytoplasmic-facing. Residues 229-249 (FTGLICAFSWFMLSLPLLFLG) traverse the membrane as a helical segment. Residues 250–269 (EAGSLGFDCTESLVARYYPG) are Extracellular-facing. The chain crosses the membrane as a helical span at residues 270–290 (PAACLALLLIILYAWSFSHFM). Topologically, residues 291–312 (DSLKNQVTVTARYFRRVPSQST) are cytoplasmic.

This sequence belongs to the Epstein-Barr virus BILF1 protein family. In terms of assembly, interacts with host CXCR4 to form higher-order heterooligomers. Interacts with host Gi heterotrimer.

It is found in the host cell membrane. The protein resides in the host mitochondrion outer membrane. Its function is as follows. Constitutively active, ligand-independent G protein-coupled receptor that has immunoevasive and oncogenic activities. Couples with the host inhibitory G protein (Gi) in order to disrupt the host chemokine signaling. As a consequence of its constitutive activity, mediates host CXCR4 inhibition. Enhances degradation of host major histocompatibility complex class I antigens via lysosomes, thereby modulating the antigen presentation to cytotoxic T cells. Targets selectively HLA-A, HLA-Band HLA-E molecules. Targets also newly synthesized MHC-I/peptide complexes en route to the host cell surface. Inhibits the host EIF2AK2/PKR phosphorylation. Displays tranforming activity. Utilizes its C-terminal tail to trigger host MAVS UFMylation via PARK2, resulting in selective MAVS removal from mitochondrial membranes and routing to lysosomes to prevent viral activation of the NLRP3 inflammasome. This is G-protein coupled receptor BILF1 from Homo sapiens (Human).